A 314-amino-acid chain; its full sequence is Nitrilase 2 (314 aa).

The region spanning 7 to 269 (VTLGVAQAAP…ETLITARVST (263 aa)) is the CN hydrolase domain. The active-site Proton acceptor is Glu47. Lys132 acts as the Proton donor in catalysis. Cys166 serves as the catalytic Nucleophile.

It belongs to the carbon-nitrogen hydrolase superfamily. Nitrilase family.

The enzyme catalyses a nitrile + 2 H2O = a carboxylate + NH4(+). Functionally, nitrilases catalyze the mild hydrolytic conversion of organonitriles directly to the corresponding carboxylic acids. Catalyzes the production of aryllactic acid derivatives. Mediates the hydrolysis of cyanohydrin to (S)-phenyllactic acid. The polypeptide is Nitrilase 2 (Unknown prokaryotic organism).